The chain runs to 1536 residues: Tyrosine-protein kinase BAZ1B (1536 aa).

The WAC domain occupies 25–130 (EVYTIEHTKE…GEKCDLMVGN (106 aa)). Disordered stretches follow at residues 144–207 (LENP…TTMK), 304–470 (PSTK…GKPF), and 557–579 (LREKAKERREKEMQVRREMSRRY). Composition is skewed to basic and acidic residues over residues 151-196 (NAEK…DRAR) and 334-343 (AKGDKKKNKD). Polar residues predominate over residues 344–355 (SQNIPLSPTIWS). Positions 392–401 (KQGDKKSSDP) are enriched in basic and acidic residues. Residues 443 to 452 (AKSPAAAGSP) are compositionally biased toward low complexity. The stretch at 515–583 (EELKELVQKR…EMSRRYEDQE (69 aa)) forms a coiled coil. The region spanning 603 to 667 (NTIFGDVAMV…LQTLLQDELA (65 aa)) is the DDT domain. Coiled-coil stretches lie at residues 768–803 (HQKSAEMWKERVATLKEANDRKRAEKQKRKEQMETK) and 850–890 (IQAK…FQDA). The span at 785-832 (ANDRKRAEKQKRKEQMETKTDGDVLIKAEKKKESTVKKETPKVLPKEE) shows a compositional bias: basic and acidic residues. The disordered stretch occupies residues 785–839 (ANDRKRAEKQKRKEQMETKTDGDVLIKAEKKKESTVKKETPKVLPKEEPEPEDMI). Positions 940–973 (PPEEEPVLTEEEEEEEEVKKEEETEDGEKEDEGS) are disordered. Acidic residues-rich tracts occupy residues 941-955 (PEEEPVLTEEEEEEE) and 962-972 (ETEDGEKEDEG). Residues 1202–1252 (NARCKVCRRKGEDDKLILCDECNKAFHLFCLRPALYRIPAGEWLCPACQPT) form a PHD-type zinc finger. 2 disordered regions span residues 1256–1371 (RSSR…KDVE) and 1477–1536 (LRRR…TKQK). The stretch at 1261-1293 (RNYKEDSEEEEDSEEEDEEESEEEDSEEEHRNT) forms a coiled coil. Residues 1266-1287 (DSEEEEDSEEEDEEESEEEDSE) show a composition bias toward acidic residues. Residues 1297–1316 (LRSRKKVKTSSKSKMQKKPA) are compositionally biased toward basic residues. Low complexity predominate over residues 1325-1350 (KTDTNPSKTSPKSSAKPKSRAAPSSP). S1349 is modified (phosphoserine). The Bromo domain occupies 1366–1470 (RKKDVELQKC…EAFVELLQKS (105 aa)). Residues 1491–1502 (NSDDDDDDEEED) show a composition bias toward acidic residues. Residues 1506–1524 (KKQKNGKQGKKASSKRKVE) are compositionally biased toward basic residues. The span at 1525-1536 (HSRTEKYQTKQK) shows a compositional bias: basic and acidic residues.

Belongs to the WAL family. BAZ1B subfamily. As to quaternary structure, interacts with smarca5/snf2h; the interaction is direct and forms the WICH complex. Component of the B-WICH complex. Mn(2+) is required as a cofactor.

The protein resides in the nucleus. The catalysed reaction is L-tyrosyl-[protein] + ATP = O-phospho-L-tyrosyl-[protein] + ADP + H(+). Its function is as follows. Atypical tyrosine-protein kinase that plays a central role in chromatin remodeling and acts as a transcription regulator. Involved in DNA damage response by phosphorylating 'Tyr-142' of histone H2AX (H2AXY142ph). H2AXY142ph plays a central role in DNA repair and acts as a mark that distinguishes between apoptotic and repair responses to genotoxic stress. Essential component of the WICH complex, a chromatin remodeling complex that mobilizes nucleosomes and reconfigures irregular chromatin to a regular nucleosomal array structure. The WICH complex regulates the transcription of various genes, has a role in RNA polymerase I and RNA polymerase III transcription, mediates the histone H2AX phosphorylation at 'Tyr-142', and is involved in the maintenance of chromatin structures during DNA replication processes. This chain is Tyrosine-protein kinase BAZ1B (baz1b), found in Danio rerio (Zebrafish).